We begin with the raw amino-acid sequence, 67 residues long: Alpha-toxin Cn12 (67 aa).

The LCN-type CS-alpha/beta domain occupies 1–66 (RDGYPLASNG…WGDSGTGPCR (66 aa)). 4 disulfide bridges follow: cysteine 11–cysteine 65, cysteine 15–cysteine 40, cysteine 25–cysteine 45, and cysteine 29–cysteine 47.

In terms of tissue distribution, expressed by the venom gland.

It is found in the secreted. Alpha toxins bind voltage-independently at site-3 of sodium channels (Nav) and inhibit the inactivation of the activated channels, thereby blocking neuronal transmission. This toxin binds, in vitro, to sodium channels and inhibits the inactivation of the activated channels. Seems not toxic to mice, crickets and sweet-water shrimps. The polypeptide is Alpha-toxin Cn12 (Centruroides noxius (Mexican scorpion)).